The chain runs to 191 residues: Cytochrome c oxidase assembly protein CtaG (191 aa).

Residues 1 to 9 (MSLSPHQKT) are Cytoplasmic-facing. The helical; Signal-anchor for type II membrane protein transmembrane segment at 10–30 (AGGLVLVVAVMGAASFAAVPF) threads the bilayer. Over 31 to 191 (YNWFCRVTGF…LAAESATDVN (161 aa)) the chain is Periplasmic.

It belongs to the COX11/CtaG family.

It localises to the cell inner membrane. In terms of biological role, exerts its effect at some terminal stage of cytochrome c oxidase synthesis, probably by being involved in the insertion of the copper B into subunit I. The chain is Cytochrome c oxidase assembly protein CtaG from Cereibacter sphaeroides (strain ATCC 17029 / ATH 2.4.9) (Rhodobacter sphaeroides).